Consider the following 304-residue polypeptide: Small ribosomal subunit biogenesis GTPase RsgA (304 aa).

One can recognise a CP-type G domain in the interval 70–229 (HNELNRPNIA…IADTPGFSKL (160 aa)). GTP is bound by residues 119–122 (TKID) and 172–180 (GQTGVGKST). 4 residues coordinate Zn(2+): Cys-253, Cys-259, His-261, and Cys-267.

This sequence belongs to the TRAFAC class YlqF/YawG GTPase family. RsgA subfamily. Monomer. Associates with 30S ribosomal subunit, binds 16S rRNA. The cofactor is Zn(2+).

It is found in the cytoplasm. One of several proteins that assist in the late maturation steps of the functional core of the 30S ribosomal subunit. Helps release RbfA from mature subunits. May play a role in the assembly of ribosomal proteins into the subunit. Circularly permuted GTPase that catalyzes slow GTP hydrolysis, GTPase activity is stimulated by the 30S ribosomal subunit. This is Small ribosomal subunit biogenesis GTPase RsgA from Phytoplasma mali (strain AT).